Consider the following 229-residue polypeptide: Orotidine 5'-phosphate decarboxylase (229 aa).

Residues Asp-12, Lys-34, 61–70 (DWKLHDIGAT), Thr-116, Arg-177, Gln-186, Gly-206, and Arg-207 each bind substrate. Residue Lys-63 is the Proton donor of the active site.

This sequence belongs to the OMP decarboxylase family. Type 1 subfamily. In terms of assembly, homodimer.

It catalyses the reaction orotidine 5'-phosphate + H(+) = UMP + CO2. It participates in pyrimidine metabolism; UMP biosynthesis via de novo pathway; UMP from orotate: step 2/2. Its function is as follows. Catalyzes the decarboxylation of orotidine 5'-monophosphate (OMP) to uridine 5'-monophosphate (UMP). The polypeptide is Orotidine 5'-phosphate decarboxylase (Caulobacter sp. (strain K31)).